A 422-amino-acid chain; its full sequence is Interleukin-11 receptor subunit alpha (422 aa).

The first 22 residues, 1-22 (MSSSCSGLSRVLVAVATALVSA), serve as a signal peptide directing secretion. Residues 24–370 (SPCPQAWGPP…DSVEQVAVLA (347 aa)) are Extracellular-facing. Residues 27–110 (PQAWGPPGVQ…LGGTVTLQLG (84 aa)) enclose the Ig-like C2-type domain. Intrachain disulfides connect cysteine 48–cysteine 94, cysteine 120–cysteine 130, and cysteine 170–cysteine 180. Fibronectin type-III domains are found at residues 112-219 (PPAR…LRPD) and 220-317 (PPQG…TPST). N-linked (GlcNAc...) asparagine glycosylation occurs at asparagine 127. Residue asparagine 194 is glycosylated (N-linked (GlcNAc...) asparagine). Residues 304–308 (WSTWS) carry the WSXWS motif motif. The interval 335-355 (EVEPQVDSPAPPRPSLQPHPR) is disordered. A helical membrane pass occupies residues 371–391 (SLGILSFLGLVAGALALGLWL). Residues 392–422 (RLRRGGKDGSPKPGFLASVIPVDRRPGAPNL) lie on the Cytoplasmic side of the membrane. The segment at 398–422 (KDGSPKPGFLASVIPVDRRPGAPNL) is disordered. Basic and acidic residues predominate over residues 413 to 422 (VDRRPGAPNL).

This sequence belongs to the type I cytokine receptor family. Type 3 subfamily. On IL11 binding, forms a multimer complex with IL6ST/gp130. A short soluble form is also released from the membrane by proteolysis. The sIL11RA is formed either by limited proteolysis of membrane-bound receptors, a process referred to as ectodomain shedding, or directly secreted from the cells after alternative mRNA splicing. mIL11RA is cleaved by the proteases ADAM10, ELANE and PRTN3. Expressed in a number of cell lines, including the myelogenous leukemia cell line K-562, the megakaryocytic leukemia cell line M-07e, the erythroleukemia cell line TF-1, and the osteosarcoma cell lines, MG-63 and SaOS-2. Also expressed in normal and malignant prostate epithelial cell lines. Expression levels are increased in prostate carcinoma.

The protein resides in the membrane. It is found in the secreted. In terms of biological role, receptor for interleukin-11 (IL11). The receptor systems for IL6, LIF, OSM, CNTF, IL11 and CT1 can utilize IL6ST for initiating signal transmission. The IL11/IL11RA/IL6ST complex may be involved in the control of proliferation and/or differentiation of skeletogenic progenitor or other mesenchymal cells. Essential for the normal development of craniofacial bones and teeth. Restricts suture fusion and tooth number. Its function is as follows. Soluble form of IL11 receptor (sIL11RA) that acts as an agonist of IL11 activity. The IL11:sIL11RA complex binds to IL6ST/gp130 on cell surfaces and induces signaling also on cells that do not express membrane-bound IL11RA in a process called IL11 trans-signaling. The chain is Interleukin-11 receptor subunit alpha from Homo sapiens (Human).